A 265-amino-acid polypeptide reads, in one-letter code: Pro-opiomelanocortin (265 aa).

The N-terminal stretch at Met-1 to Gly-26 is a signal peptide. 2 disulfide bridges follow: Cys-28–Cys-50 and Cys-34–Cys-46. An O-linked (GalNAc...) threonine glycan is attached at Thr-71. A Phenylalanine amide modification is found at Phe-87. Positions Arg-89–Phe-138 are disordered. Residue Asn-91 is glycosylated (N-linked (GlcNAc...) asparagine). Positions Glu-106–Asp-129 are excised as a propeptide. Residues Arg-118–Phe-138 are compositionally biased toward basic and acidic residues. N-acetylserine; in Corticotropin is present on Ser-132. Val-144 carries the post-translational modification Valine amide. Ser-162 carries the post-translational modification Phosphoserine. At Glu-173 the chain carries Pyrrolidone carboxylic acid (Glu); partial. Tyr-200 is subject to Sulfotyrosine. Residues Glu-209 to Thr-240 form a disordered region. Residues Ala-210 to Tyr-235 show a composition bias toward basic and acidic residues.

It belongs to the POMC family. Specific enzymatic cleavages at paired basic residues yield the different active peptides. As to expression, ACTH and MSH are produced by the pituitary gland.

It is found in the secreted. Its function is as follows. Stimulates the adrenal glands to release cortisol. Anorexigenic peptide. Increases the pigmentation of skin by increasing melanin production in melanocytes. Functionally, endogenous orexigenic opiate. In terms of biological role, endogenous opiate. This is Pro-opiomelanocortin (POMC) from Bos taurus (Bovine).